Here is a 210-residue protein sequence, read N- to C-terminus: Somatotropin-2 (210 aa).

The first 22 residues, 1–22 (MARALVLLSVVLVSLLVNQGRA), serve as a signal peptide directing secretion. His-38 is a binding site for Zn(2+). A disulfide bond links Cys-71 and Cys-183. Position 192 (Glu-192) interacts with Zn(2+). Cysteines 200 and 208 form a disulfide.

The protein belongs to the somatotropin/prolactin family.

It is found in the secreted. Its function is as follows. Growth hormone plays an important role in growth control and is involved in the regulation of several anabolic processes. Implicated as an osmoregulatory substance important for seawater adaptation. In Carassius auratus (Goldfish), this protein is Somatotropin-2 (gh2).